A 681-amino-acid chain; its full sequence is Minichromosome maintenance domain-containing protein 2 (681 aa).

A Phosphoserine modification is found at S292. The MCM domain maps to 533-621 (KQFTTEDFEK…LIAALLFEIS (89 aa)).

Its function is as follows. Plays an important role in meiotic recombination and associated DNA double-strand break repair. The polypeptide is Minichromosome maintenance domain-containing protein 2 (Mcmdc2) (Rattus norvegicus (Rat)).